The sequence spans 315 residues: Acetaldehyde dehydrogenase 2 (315 aa).

13-16 is a binding site for NAD(+); it reads SGNI. The active-site Acyl-thioester intermediate is the C131. Residues 162 to 170 and N290 contribute to the NAD(+) site; that span reads SAGPGTRAN.

This sequence belongs to the acetaldehyde dehydrogenase family.

It catalyses the reaction acetaldehyde + NAD(+) + CoA = acetyl-CoA + NADH + H(+). This Pseudomonas putida (strain W619) protein is Acetaldehyde dehydrogenase 2.